Here is a 368-residue protein sequence, read N- to C-terminus: MNIINKKVIVGMSGGVDSSVSALLLLQQGYTVEGLFMKNWEEDDHEQYCTVAKDLADAQAVCNQLGIILHKVNFAAEYWDNVFEYFLAEYQVGRTPNPDILCNKNIKFKVFLDFATQNLGADYIATGHYVIRKDINGKSRLLRGLDNQKDQSYFLYTIGYQQMARCFFPLGKLNKLRVREIAAKQGLVTASKKDSTGICFIGKRKLSDLLSRYISAKPGAIITVDNEYIGYHQGLMYYTLGQRKKLGIGGTKNGSQDPWYVVDKDINHNLLIIAQGHNHPRLMSNGLIASKLYWVDRTTLSTPLRCTVKTRYRQSDIGCLIKPIANNQLQVDFDYPVAAVTPGQSAVFYLAEQCIGGGTIEIRKPLGS.

ATP-binding positions include 11–18 and Met-37; that span reads GMSGGVDS. The interval 97–99 is interaction with target base in tRNA; sequence NPD. Cys-102 serves as the catalytic Nucleophile. Cysteines 102 and 199 form a disulfide. Gly-127 is an ATP binding site. Residues 149-151 form an interaction with tRNA region; it reads KDQ. The active-site Cysteine persulfide intermediate is the Cys-199. An interaction with tRNA region spans residues 311-312; the sequence is RY.

Belongs to the MnmA/TRMU family.

It is found in the cytoplasm. The enzyme catalyses S-sulfanyl-L-cysteinyl-[protein] + uridine(34) in tRNA + AH2 + ATP = 2-thiouridine(34) in tRNA + L-cysteinyl-[protein] + A + AMP + diphosphate + H(+). Catalyzes the 2-thiolation of uridine at the wobble position (U34) of tRNA, leading to the formation of s(2)U34. The protein is tRNA-specific 2-thiouridylase MnmA of Baumannia cicadellinicola subsp. Homalodisca coagulata.